A 190-amino-acid chain; its full sequence is Guanylate kinase (190 aa).

Residues 7-186 (GKLIVFSAPS…AVDDVEAAIV (180 aa)) enclose the Guanylate kinase-like domain. An ATP-binding site is contributed by 14-21 (APSGAGKT).

This sequence belongs to the guanylate kinase family.

The protein resides in the cytoplasm. The enzyme catalyses GMP + ATP = GDP + ADP. Functionally, essential for recycling GMP and indirectly, cGMP. This chain is Guanylate kinase, found in Chlorobium chlorochromatii (strain CaD3).